Reading from the N-terminus, the 257-residue chain is AN1-type zinc finger protein 2B (257 aa).

2 consecutive AN1-type zinc fingers follow at residues 4–52 and 94–142; these read PDLG…QKDI and KIFT…HQTS. Zn(2+) contacts are provided by Cys-10, Cys-15, Cys-25, Cys-28, Cys-33, His-36, His-42, Cys-44, Cys-100, Cys-105, Cys-115, Cys-118, Cys-123, His-126, His-132, and Cys-134. The interval 141–151 is VCP/p97-interacting motif (VIM); sequence TSRAGLAAISR. A disordered region spans residues 152–184; sequence AQGLASTSTAPSPSRTLPSSSSPSRATPQLPTR. Low complexity predominate over residues 155 to 179; that stretch reads LASTSTAPSPSRTLPSSSSPSRATP. 3 positions are modified to phosphoserine; by MAPK14: Ser-163, Ser-173, and Ser-187. 2 consecutive UIM domains span residues 197 to 216 and 221 to 240; these read SEDE…AKPQ and QEED…AEYQ. Cys-254 is subject to Cysteine methyl ester. The S-geranylgeranyl cysteine moiety is linked to residue Cys-254. The CAAX motif motif lies at 254–257; that stretch reads CSLC. Residues 255 to 257 constitute a propeptide, removed in mature form; sequence SLC.

As to quaternary structure, binds 'Lys-48'-linked polyubiquitin chains of ubiquitinated proteins. Associates with the proteasome complex; upon exposure to arsenite. Interacts (via VIM motif) with VCP; the interaction is direct. Interacts with BAG6. Interacts with IGF1R (nascent precursor form). Interacts with DERL1, FAF2, NPLOC4 and UFD1; probably through VCP. Post-translationally, phosphorylated by MAPK14. Phosphorylation has no effect on association with the proteasome complex.

It is found in the endoplasmic reticulum membrane. Its function is as follows. Plays a role in protein homeostasis by regulating both the translocation and the ubiquitin-mediated proteasomal degradation of nascent proteins at the endoplasmic reticulum. It is involved in the regulation of signal-mediated translocation of proteins into the endoplasmic reticulum. It also plays a role in the ubiquitin-mediated proteasomal degradation of proteins for which signal-mediated translocation to the endoplasmic reticulum has failed. May therefore function in the endoplasmic reticulum stress-induced pre-emptive quality control, a mechanism that selectively attenuates the translocation of newly synthesized proteins into the endoplasmic reticulum and reroutes them to the cytosol for proteasomal degradation. By controlling the steady-state expression of the IGF1R receptor, indirectly regulates the insulin-like growth factor receptor signaling pathway. This is AN1-type zinc finger protein 2B from Mus musculus (Mouse).